Here is a 295-residue protein sequence, read N- to C-terminus: Universal stress protein Mb2028c (295 aa).

Residues Gly-13, 117-123 (GSSGRGA), 131-132 (SV), Gly-165, Asp-198, 262-268 (GSHGRGG), and 276-278 (SVS) each bind ATP.

It belongs to the universal stress protein A family.

This is Universal stress protein Mb2028c from Mycobacterium bovis (strain ATCC BAA-935 / AF2122/97).